Here is a 566-residue protein sequence, read N- to C-terminus: KsdD-like steroid dehydrogenase Rv0785 (566 aa).

23 to 54 contributes to the FAD binding site; it reads DAIVVGAGLAGLVAACELADRGLRVLILDQEN.

The protein belongs to the FAD-dependent oxidoreductase 2 family. The cofactor is FAD.

Its pathway is lipid metabolism; steroid biosynthesis. Functionally, able to catalyze the elimination of the C-1 and C-2 hydrogen atoms of the A-ring from the polycyclic ring structure of 3-ketosteroids. This is KsdD-like steroid dehydrogenase Rv0785 from Mycobacterium tuberculosis (strain ATCC 25618 / H37Rv).